Consider the following 446-residue polypeptide: Exopolygalacturonase (446 aa).

Positions Met1–Ala17 are cleaved as a signal peptide. 4 N-linked (GlcNAc...) asparagine glycosylation sites follow: Asn53, Asn118, Asn134, and Asn204. The stretch at Ser236–Pro257 is one PbH1 1 repeat. Asp250 functions as the Proton donor in the catalytic mechanism. An intrachain disulfide couples Cys252 to Cys269. Asn258 and Asn270 each carry an N-linked (GlcNAc...) asparagine glycan. 3 PbH1 repeats span residues Ser259–Ser279, Val290–Val311, and Val332–Gln353. Residue His273 is part of the active site. N-linked (GlcNAc...) asparagine glycans are attached at residues Asn297, Asn302, Asn334, Asn359, and Asn369. 2 PbH1 repeats span residues Pro367–Ser398 and Cys403–Val434. Intrachain disulfides connect Cys397/Cys403 and Cys424/Cys436. A glycan (N-linked (GlcNAc...) asparagine) is linked at Asn435.

The protein belongs to the glycosyl hydrolase 28 family.

The protein resides in the secreted. The enzyme catalyses [(1-&gt;4)-alpha-D-galacturonosyl](n) + H2O = alpha-D-galacturonate + [(1-&gt;4)-alpha-D-galacturonosyl](n-1). Functionally, hydrolysis of 1,4-alpha-D-galactosiduronic linkages in pectate and other galacturonans. This chain is Exopolygalacturonase (PGX1), found in Cochliobolus carbonum (Maize leaf spot fungus).